Here is a 312-residue protein sequence, read N- to C-terminus: Structure-specific endonuclease subunit SLX1 (312 aa).

In terms of domain architecture, GIY-YIG spans 9 to 92 (DFYGCYLLQS…QHGYQTRYIK (84 aa)). An SLX1-type zinc finger spans residues 219-282 (CQFCNKIIKH…IPQSPKCPKC (64 aa)).

This sequence belongs to the SLX1 family. Forms a heterodimer with SLX4. Requires a divalent metal cation as cofactor.

It is found in the nucleus. Catalytic subunit of the SLX1-SLX4 structure-specific endonuclease that resolves DNA secondary structures generated during DNA repair and recombination. Has endonuclease activity towards branched DNA substrates, introducing single-strand cuts in duplex DNA close to junctions with ss-DNA. This chain is Structure-specific endonuclease subunit SLX1, found in Candida glabrata (strain ATCC 2001 / BCRC 20586 / JCM 3761 / NBRC 0622 / NRRL Y-65 / CBS 138) (Yeast).